Reading from the N-terminus, the 101-residue chain is Pro-corazonin (101 aa).

An N-terminal signal peptide occupies residues 1–16 (MLVLFVLSLVVSCALC). Asparagine 27 carries the post-translational modification Asparagine amide. A propeptide spanning residues 31–101 (SNFPAEISAL…REKAPNNDNY (71 aa)) is cleaved from the precursor.

This sequence belongs to the corazonin family. In terms of tissue distribution, expressed in central brain and the retrocerebral complex but not in antennal lobes, optic lobes or in gnathal, thoracic and abdominal ganglia (at protein level).

The protein localises to the secreted. In terms of biological role, cardioactive peptide. Corazonin is probably involved in the physiological regulation of the heart beat. This chain is Pro-corazonin, found in Camponotus floridanus (Florida carpenter ant).